The chain runs to 163 residues: Nucleotide-binding protein Npun_R4736 (163 aa).

Belongs to the YajQ family.

Nucleotide-binding protein. The polypeptide is Nucleotide-binding protein Npun_R4736 (Nostoc punctiforme (strain ATCC 29133 / PCC 73102)).